We begin with the raw amino-acid sequence, 257 residues long: Asnovolin H dehydrogenase nvfC (257 aa).

Residues 7–26 (YVLIITGSASGIGLATATIA) form a helical membrane-spanning segment. Residue I11 participates in NADP(+) binding. Residues N57, N92, and N110 are each glycosylated (N-linked (GlcNAc...) asparagine). Residues R119, Y151, K155, and V184 each coordinate NADP(+). Residue Y151 is the Proton donor of the active site. The active-site Lowers pKa of active site Tyr is the K155.

Belongs to the short-chain dehydrogenases/reductases (SDR) family.

It is found in the membrane. The enzyme catalyses asnovolin H + A = chermesin D + AH2. Its pathway is secondary metabolite biosynthesis; terpenoid biosynthesis. In terms of biological role, short chain dehydrogenase; part of the gene cluster that mediates the biosynthesis of novofumigatonin, a heavily oxygenated meroterpenoid containing a unique orthoester moiety. The first step of the pathway is the synthesis of 3,5-dimethylorsellinic acid (DMOA) by the polyketide synthase nvfA via condensation of one acetyl-CoA starter unit with 3 malonyl-CoA units and 2 methylations. DMOA is then converted to farnesyl-DMOA by the farnesyltransferase nvfB. Epoxydation by FAD-dependent monooxygenase nvfK, followed by a protonation-initiated cyclization catalyzed by the terpene cyclase nvfL leads to the production of asnavolin H. The short chain dehydrogenase nvfC then as a 3-OH dehydrogenase of asnovolin H to yield chemesin D. There are two branches to synthesize asnovolin A from chemesin D. In one branch, chemesin D undergoes Baeyer-Villiger oxidation by nvfH, methylation by nvfJ, and enoyl reduction by the nvfM D enoylreductase that reduces the double bond between C-5'and C-6', to form respectively asnovolin I, asnovolin K, and asnovolin A. In the other branch, the methylation precedes the Baeyer-Villiger oxidation and the enoyl reduction to yield asnovolin A via the asnovolin J intermediate. Asnovolin A is further converted to fumigatonoid A by the Fe(II)/2-oxoglutarate-dependent dioxygenase nvfI that catalyzes an endoperoxidation reaction. The alpha/beta hydrolase nvfD then acts as an epimerase that converts fumigatonoid A to its C-5' epimer, which then undergoes spontaneous or nvfD-catalyzed lactonization. The following step utilizes the ketoreductase nvfG to produce fumigatonoid B. The dioxygenase nvfE further converts fumigatonoid B into fumigatonoid C. Finally the Fe(II)/2-oxoglutarate-dependent dioxygenase nvfF catalyzes two rounds of oxidation to transform fumigatonoid C into the end product, novofumigatonin A. The chain is Asnovolin H dehydrogenase nvfC from Aspergillus novofumigatus (strain IBT 16806).